Reading from the N-terminus, the 363-residue chain is Pyrimidine monooxygenase RutA (363 aa).

Residues 49–50 (IK), asparagine 115, glutamate 124, 140–141 (RY), and serine 190 each bind FMN.

This sequence belongs to the NtaA/SnaA/DszA monooxygenase family. RutA subfamily.

It catalyses the reaction uracil + FMNH2 + NADH + O2 = (Z)-3-ureidoacrylate + FMN + NAD(+) + H2O + H(+). It carries out the reaction thymine + FMNH2 + NADH + O2 = (Z)-2-methylureidoacrylate + FMN + NAD(+) + H2O + H(+). Its function is as follows. Catalyzes the pyrimidine ring opening between N-3 and C-4 by an unusual flavin hydroperoxide-catalyzed mechanism, adding oxygen atoms in the process to yield ureidoacrylate peracid, that immediately reacts with FMN forming ureidoacrylate and FMN-N(5)-oxide. The FMN-N(5)-oxide reacts spontaneously with NADH to produce FMN. Requires the flavin reductase RutF to regenerate FMN in vivo. The protein is Pyrimidine monooxygenase RutA of Escherichia coli (strain SMS-3-5 / SECEC).